The primary structure comprises 270 residues: NAD kinase (270 aa).

The active-site Proton acceptor is the aspartate 63. NAD(+) is bound by residues 63-64 (DG), 131-132 (NE), lysine 142, arginine 159, aspartate 161, 172-177 (TAYAMS), alanine 196, and glutamine 230.

It belongs to the NAD kinase family. It depends on a divalent metal cation as a cofactor.

It localises to the cytoplasm. It carries out the reaction NAD(+) + ATP = ADP + NADP(+) + H(+). In terms of biological role, involved in the regulation of the intracellular balance of NAD and NADP, and is a key enzyme in the biosynthesis of NADP. Catalyzes specifically the phosphorylation on 2'-hydroxyl of the adenosine moiety of NAD to yield NADP. The protein is NAD kinase of Methanoculleus marisnigri (strain ATCC 35101 / DSM 1498 / JR1).